A 735-amino-acid chain; its full sequence is Catalase-peroxidase (735 aa).

The segment at residues 95–223 (WHSAGTYRTG…LAAVQMGLIY (129 aa)) is a cross-link (tryptophyl-tyrosyl-methioninium (Trp-Tyr) (with M-249)). Catalysis depends on His96, which acts as the Proton acceptor. Positions 223 to 249 (YVNPEGPDGVPDPIKSGIDIRETFARM) form a cross-link, tryptophyl-tyrosyl-methioninium (Tyr-Met) (with W-95). His264 lines the heme b pocket.

This sequence belongs to the peroxidase family. Peroxidase/catalase subfamily. In terms of assembly, homodimer or homotetramer. Requires heme b as cofactor. Formation of the three residue Trp-Tyr-Met cross-link is important for the catalase, but not the peroxidase activity of the enzyme.

It carries out the reaction H2O2 + AH2 = A + 2 H2O. The enzyme catalyses 2 H2O2 = O2 + 2 H2O. Bifunctional enzyme with both catalase and broad-spectrum peroxidase activity. In Aliarcobacter butzleri (strain RM4018) (Arcobacter butzleri), this protein is Catalase-peroxidase.